The primary structure comprises 152 residues: Small ribosomal subunit protein uS15 (152 aa).

It belongs to the universal ribosomal protein uS15 family. As to quaternary structure, part of the 30S ribosomal subunit.

The chain is Small ribosomal subunit protein uS15 from Methanocorpusculum labreanum (strain ATCC 43576 / DSM 4855 / Z).